We begin with the raw amino-acid sequence, 282 residues long: 3-methyl-2-oxobutanoate hydroxymethyltransferase (282 aa).

Mg(2+)-binding residues include Asp-63 and Asp-102. 3-methyl-2-oxobutanoate-binding positions include 63-64 (DS), Asp-102, and Lys-132. Residue Glu-134 participates in Mg(2+) binding. Glu-200 acts as the Proton acceptor in catalysis.

Belongs to the PanB family. In terms of assembly, homodecamer; pentamer of dimers. Mg(2+) serves as cofactor.

It is found in the cytoplasm. The catalysed reaction is 3-methyl-2-oxobutanoate + (6R)-5,10-methylene-5,6,7,8-tetrahydrofolate + H2O = 2-dehydropantoate + (6S)-5,6,7,8-tetrahydrofolate. The protein operates within cofactor biosynthesis; (R)-pantothenate biosynthesis; (R)-pantoate from 3-methyl-2-oxobutanoate: step 1/2. In terms of biological role, catalyzes the reversible reaction in which hydroxymethyl group from 5,10-methylenetetrahydrofolate is transferred onto alpha-ketoisovalerate to form ketopantoate. The polypeptide is 3-methyl-2-oxobutanoate hydroxymethyltransferase (Mycobacterium sp. (strain JLS)).